Here is a 277-residue protein sequence, read N- to C-terminus: Sulfate transport system permease protein CysT (277 aa).

7 consecutive transmembrane segments (helical) span residues Leu-17–Met-37, Leu-64–Ile-84, Leu-99–Phe-119, Val-136–Val-156, Phe-185–Phe-205, Val-215–Val-235, and Pro-243–Ile-263. The ABC transmembrane type-1 domain occupies Tyr-60–Ile-263.

Belongs to the binding-protein-dependent transport system permease family. CysTW subfamily. In terms of assembly, the complex is composed of two ATP-binding proteins (CysA), two transmembrane proteins (CysT and CysW) and a solute-binding protein (CysP).

Its subcellular location is the cell inner membrane. In terms of biological role, part of the ABC transporter complex CysAWTP (TC 3.A.1.6.1) involved in sulfate/thiosulfate import. Probably responsible for the translocation of the substrate across the membrane. The sequence is that of Sulfate transport system permease protein CysT (cysU) from Escherichia coli (strain K12).